An 87-amino-acid polypeptide reads, in one-letter code: LYR motif-containing protein 2 (87 aa).

The N-terminal 19 residues, 1-19, are a transit peptide targeting the mitochondrion; it reads MGSRLPPAALTLKQFLVRQ.

The protein belongs to the complex I LYR family.

Its subcellular location is the mitochondrion. In terms of biological role, involved in efficient integration of the N-module into mitochondrial respiratory chain complex I. The chain is LYR motif-containing protein 2 (lyrm2) from Xenopus tropicalis (Western clawed frog).